Reading from the N-terminus, the 64-residue chain is Large ribosomal subunit protein bL35 (64 aa).

Composition is skewed to basic residues over residues 1-15 and 27-42; these read MPKN…KRFK and AGKR…KKTR. Positions 1 to 45 are disordered; sequence MPKNKTHSGASKRFKITGSGKVLRERAGKRHLLEHKSSKKTRSLT.

This sequence belongs to the bacterial ribosomal protein bL35 family.

The sequence is that of Large ribosomal subunit protein bL35 from Streptomyces griseus subsp. griseus (strain JCM 4626 / CBS 651.72 / NBRC 13350 / KCC S-0626 / ISP 5235).